Reading from the N-terminus, the 461-residue chain is Cytochrome c biogenesis protein CcsB (461 aa).

The next 3 helical transmembrane spans lie at Leu-32–Ile-52, Thr-91–Thr-111, and Ile-178–Ala-198.

Belongs to the Ccs1/CcsB family. In terms of assembly, may interact with CcsA.

The protein resides in the cellular thylakoid membrane. Its function is as follows. Required during biogenesis of c-type cytochromes (cytochrome c6 and cytochrome f) at the step of heme attachment. This Nostoc sp. (strain PCC 7120 / SAG 25.82 / UTEX 2576) protein is Cytochrome c biogenesis protein CcsB.